A 374-amino-acid chain; its full sequence is MSAALFCGPPPAVSFGCKDGRGRKGMVRSKDIVRQTVKPPAHACRLIGWNKYPGSVVPTNSSLSPSPTALDDDIELDLSPFLIIYKDGRIERLKGTTVIPACPEVATKDVIIDPATGVSVRLYLPNVVDLPSKKLPVLVYFHGGGFVIENTGSPNYHNYLTLLAAKSGLLIVSVNYRLAPEHPIPASFDDCMAGFNWVVSHSAGPAPEPWLARHGDLTQILISGDSAGGTVTHYVLLRADAGVIEGAALVHPYFLGSKRLENQTEEDFEFHEKLWRLSTPNTEGLDDPLINPLAPGAPSLAGLKCKRAVVFVAELDFLVERGRMYYDALVKSGWGGEAELVHQEGVGHVFHLSDYSGDVSVDMMAKMVAFLRGE.

Residues Met-1–Thr-68 constitute an amyloplast transit peptide. Residue Ser-226 is the Acyl-ester intermediate of the active site. Catalysis depends on charge relay system residues Asp-316 and His-348.

This sequence belongs to the AB hydrolase superfamily. In terms of assembly, homodimer. In terms of tissue distribution, highly expressed in pistil and bulb scales. Lower expression in stem, and barely detected in root, leaf, petal and stamen.

It localises to the plastid. Its subcellular location is the amyloplast. The enzyme catalyses 6-tuliposide A = tulipalin A + D-glucose. Lactone-forming carboxylesterases, specifically catalyzing intramolecular transesterification, but not hydrolysis. Involved in the biosynthesis of tulipalins, defensive chemicals that show antimicrobial activities against a broad range of strains of bacteria and fungi. Substrates are 6-tuliposide A &gt; 6-tuliposide B. This Tulipa gesneriana (Garden tulip) protein is Tuliposide A-converting enzyme b3, amyloplastic (TCEA-B3).